Consider the following 498-residue polypeptide: UDP-N-acetylmuramate--L-alanine ligase (498 aa).

Residue 120–126 participates in ATP binding; that stretch reads GSHGKTT.

This sequence belongs to the MurCDEF family.

Its subcellular location is the cytoplasm. The enzyme catalyses UDP-N-acetyl-alpha-D-muramate + L-alanine + ATP = UDP-N-acetyl-alpha-D-muramoyl-L-alanine + ADP + phosphate + H(+). It functions in the pathway cell wall biogenesis; peptidoglycan biosynthesis. Its function is as follows. Cell wall formation. This chain is UDP-N-acetylmuramate--L-alanine ligase, found in Rickettsia typhi (strain ATCC VR-144 / Wilmington).